Here is an 84-residue protein sequence, read N- to C-terminus: MEKKKYSKRYCRYTEAKLEYIDYKDVEMLKHSLSERYKIMPRRLTGNTKRWQERVEVAIKRARHMALIPYIVDRKKVVENPFKI.

Belongs to the bacterial ribosomal protein bS18 family. In terms of assembly, part of the 30S ribosomal subunit. Forms a tight heterodimer with protein bS6.

In terms of biological role, binds as a heterodimer with protein bS6 to the central domain of the 16S rRNA, where it helps stabilize the platform of the 30S subunit. The protein is Small ribosomal subunit protein bS18 of Helicobacter hepaticus (strain ATCC 51449 / 3B1).